A 758-amino-acid polypeptide reads, in one-letter code: General transcription and DNA repair factor IIH helicase subunit XPD (758 aa).

The Helicase ATP-binding domain maps to 7–285 (DVTVYFPYDN…TDAGRLRAEY (279 aa)). 42–49 (MPTGTGKT) is a binding site for ATP. Cysteine 116, cysteine 134, cysteine 155, and cysteine 190 together coordinate [4Fe-4S] cluster. The DEAH box motif lies at 234–238 (DEAHN).

The protein belongs to the helicase family. RAD3/XPD subfamily. Component of the 7-subunit TFIIH core complex composed of XPB, XPD, TFB1/GTF2H1, GTF2H2/P44, TFB4/GTF2H3, TFB2/GTF2H4 and TFB5/GTF2H5, which is active in NER. The core complex associates with the 3-subunit CDK-activating kinase (CAK) module composed of CYCH1/cyclin H1, CDKD and MAT1/At4g30820 to form the 10-subunit holoenzyme (holo-TFIIH) active in transcription. Interacts with GTF2H2/p44. [4Fe-4S] cluster serves as cofactor. Expressed at low levels in all tissues.

It localises to the nucleus. It catalyses the reaction Couples ATP hydrolysis with the unwinding of duplex DNA at the replication fork by translocating in the 5'-3' direction. This creates two antiparallel DNA single strands (ssDNA). The leading ssDNA polymer is the template for DNA polymerase III holoenzyme which synthesizes a continuous strand.. The catalysed reaction is ATP + H2O = ADP + phosphate + H(+). In terms of biological role, ATP-dependent 5'-3' DNA helicase, component of the general transcription and DNA repair factor IIH (TFIIH) core complex, which is involved in general and transcription-coupled nucleotide excision repair (NER) of damaged DNA and, when complexed to CDK-activating kinase (CAK), involved in transcription by RNA polymerase II. In NER, TFIIH acts by opening DNA around the lesion to allow the excision of the damaged oligonucleotide and its replacement by a new DNA fragment. The ATP-dependent helicase activity of XPD is required for DNA opening. In transcription, TFIIH has an essential role in transcription initiation. When the pre-initiation complex (PIC) has been established, TFIIH is required for promoter opening and promoter escape. Phosphorylation of the C-terminal tail (CTD) of the largest subunit of RNA polymerase II by the kinase module CAK controls the initiation of transcription. XPD acts by forming a bridge between CAK and the core-TFIIH complex. Essential during plant growth. May negatively regulate a common response program mediated by UV damage and heat stress, that leads to tissue death and reduced chloroplast function. The sequence is that of General transcription and DNA repair factor IIH helicase subunit XPD from Arabidopsis thaliana (Mouse-ear cress).